We begin with the raw amino-acid sequence, 630 residues long: tRNA uridine 5-carboxymethylaminomethyl modification enzyme MnmG (630 aa).

13-18 (GGGHAG) provides a ligand contact to FAD. 273 to 287 (GPRYCPSIEDKVMRF) is an NAD(+) binding site.

Belongs to the MnmG family. In terms of assembly, homodimer. Heterotetramer of two MnmE and two MnmG subunits. It depends on FAD as a cofactor.

It localises to the cytoplasm. NAD-binding protein involved in the addition of a carboxymethylaminomethyl (cmnm) group at the wobble position (U34) of certain tRNAs, forming tRNA-cmnm(5)s(2)U34. The chain is tRNA uridine 5-carboxymethylaminomethyl modification enzyme MnmG from Actinobacillus pleuropneumoniae serotype 5b (strain L20).